A 163-amino-acid polypeptide reads, in one-letter code: UPF0134 protein MPN_139 (163 aa).

Belongs to the UPF0134 family.

The polypeptide is UPF0134 protein MPN_139 (Mycoplasma pneumoniae (strain ATCC 29342 / M129 / Subtype 1) (Mycoplasmoides pneumoniae)).